The chain runs to 137 residues: Fluoride-specific ion channel FluC 1 (137 aa).

Helical transmembrane passes span 4–24 (LIYIMVGIAGILGALSRYYLG), 37–57 (LATLLINLAGCFLLAWLTTYI), 67–87 (VITGIGTGFIGSFTTFSTFSV), and 98–118 (WGIAFLYVSCSILGGLIMSGL). 2 residues coordinate Na(+): glycine 77 and threonine 80.

It belongs to the fluoride channel Fluc/FEX (TC 1.A.43) family.

It localises to the cell membrane. The catalysed reaction is fluoride(in) = fluoride(out). Na(+) is not transported, but it plays an essential structural role and its presence is essential for fluoride channel function. Fluoride-specific ion channel. Important for reducing fluoride concentration in the cell, thus reducing its toxicity. This Bacillus cereus (strain ZK / E33L) protein is Fluoride-specific ion channel FluC 1.